The primary structure comprises 720 residues: DNA replication licensing factor mcm7 (720 aa).

The segment at 183-210 (CDQCGAETYQPIQSPTFMPLIMCPSREC) adopts a C4-type zinc-finger fold. The 207-residue stretch at 331-537 (FYEKLAASIA…NDLRLAQHIT (207 aa)) folds into the MCM domain. 8 residues coordinate ATP: Y344, G383, A385, K386, S387, N488, R513, and R603. The Arginine finger motif lies at 512–515 (SRFD).

The protein belongs to the MCM family. In terms of assembly, component of the mcm2-7 complex (RLF-M). The complex forms a toroidal hexameric ring with the proposed subunit order mcm2-mcm6-mcm4-mcm7-mcm3-mcm5. The heterodimer of mmcm3/mcm5 interacts with mcm4, mmcm6, mcm7 and weakly with mcm2. The N-terminus is required for interaction with mmcm3, though this interaction may not be direct, and remains in a complex with mmcm3 throughout the cell cycle. Begins to associate with zmcm6 at the neurula stage. Component of the replisome complex. Component of the CMG helicase complex, composed of the mcm2-7 complex, the GINS complex and cdc45. In terms of processing, ubiquitinated by traip when forks converge following formation of DNA interstrand cross-links. Short ubiquitin chains on mcm7 promote recruitment of DNA glycosylase neil3. If the interstrand cross-link cannot be cleaved by neil3, the ubiquitin chains continue to grow on mcm7, promoting the unloading of the CMG helicase complex by the vcp/p97 ATPase.

It is found in the nucleus. The protein resides in the chromosome. The catalysed reaction is ATP + H2O = ADP + phosphate + H(+). Acts as a component of the mcm2-7 complex (mcm complex) which is the putative replicative helicase essential for 'once per cell cycle' DNA replication initiation and elongation in eukaryotic cells. The active ATPase sites in the mcm2-7 ring are formed through the interaction surfaces of two neighboring subunits such that a critical structure of a conserved arginine finger motif is provided in trans relative to the ATP-binding site of the Walker A box of the adjacent subunit. The six ATPase active sites, however, are likely to contribute differentially to the complex helicase activity. The existence of maternal and zygotic forms of mcm3 and mcm6 suggests that specific forms of mcm2-7 complexes may be used during different stages of development. This is DNA replication licensing factor mcm7 from Xenopus tropicalis (Western clawed frog).